A 66-amino-acid polypeptide reads, in one-letter code: uncharacterized protein (66 aa).

2 helical membrane-spanning segments follow: residues 3–23 (LIHV…PFAN) and 34–54 (FILA…AIVY).

The protein resides in the cell membrane. This is an uncharacterized protein from Bacillus subtilis (strain 168).